The chain runs to 734 residues: Diacylglycerol kinase alpha (734 aa).

EF-hand domains are found at residues 109 to 144 (RPED…MMRM) and 154 to 189 (ELRP…TVPL). 9 residues coordinate Ca(2+): Asp122, Asp124, Asn126, Glu133, Asp167, Asp169, Ser171, Ser173, and Glu178. Phorbol-ester/DAG-type zinc fingers lie at residues 204–252 (QHMW…ALPC) and 268–318 (SHVW…GHEC). In terms of domain architecture, DAGKc spans 371–505 (SNTHPLLVFV…MDRWSVEVIP (135 aa)). Lys483 carries the post-translational modification N6-acetyllysine.

It belongs to the eukaryotic diacylglycerol kinase family. Monomer.

The protein resides in the cytoplasm. Its subcellular location is the cytosol. It carries out the reaction a 1,2-diacyl-sn-glycerol + ATP = a 1,2-diacyl-sn-glycero-3-phosphate + ADP + H(+). The enzyme catalyses a 1-O-alkyl-sn-glycerol + ATP = a 1-O-alkyl-sn-glycero-3-phosphate + ADP + H(+). It catalyses the reaction 1-O-alkyl-2-acyl-sn-glycerol + ATP = 1-O-alkyl-2-acyl-sn-glycero-3-phosphate + ADP + H(+). The catalysed reaction is 1,2-dihexadecanoyl-sn-glycerol + ATP = 1,2-dihexadecanoyl-sn-glycero-3-phosphate + ADP + H(+). It carries out the reaction 1-hexadecanoyl-2-(9Z-octadecenoyl)-sn-glycerol + ATP = 1-hexadecanoyl-2-(9Z-octadecenoyl)-sn-glycero-3-phosphate + ADP + H(+). The enzyme catalyses 2-(9Z-octadecenoyl)-glycerol + ATP = 2-(9Z-octadecenoyl)-sn-glycero-3-phosphate + ADP + H(+). It catalyses the reaction 1,2-di-(9Z-octadecenoyl)-sn-glycerol + ATP = 1,2-di-(9Z-octadecenoyl)-sn-glycero-3-phosphate + ADP + H(+). The catalysed reaction is 1-octadecanoyl-2-(5Z,8Z,11Z,14Z-eicosatetraenoyl)-sn-glycerol + ATP = 1-octadecanoyl-2-(5Z,8Z,11Z,14Z-eicosatetraenoyl)-sn-glycero-3-phosphate + ADP + H(+). It carries out the reaction 1,2-didecanoyl-sn-glycerol + ATP = 1,2-didecanoyl-sn-glycero-3-phosphate + ADP + H(+). The enzyme catalyses 1-O-hexadecyl-2-acetyl-sn-glycerol + ATP = 1-O-hexadecyl-2-acetyl-sn-glycero-3-phosphate + ADP + H(+). It catalyses the reaction 1-O-hexadecyl-2-(5Z,8Z,11Z,14Z-eicosatetraenoyl)-sn-glycerol + ATP = 1-O-hexadecyl-2-(5Z,8Z,11Z,14Z-eicosatetraenoyl)-sn-glycero-3-phosphate + ADP + H(+). The catalysed reaction is 1-O-hexadecyl-2-(9Z-octadecenoyl)-sn-glycerol + ATP = 1-O-hexadecyl-2-(9Z-octadecenoyl)-sn-glycero-3-phosphate + ADP + H(+). It carries out the reaction 1-O-hexadecyl-sn-glycerol + ATP = 1-O-hexadecyl-sn-glycero-3-phosphate + ADP + H(+). It participates in lipid metabolism; glycerolipid metabolism. With respect to regulation, stimulated by calcium and phosphatidylserine. Functionally, diacylglycerol kinase that converts diacylglycerol/DAG into phosphatidic acid/phosphatidate/PA and regulates the respective levels of these two bioactive lipids. Thereby, acts as a central switch between the signaling pathways activated by these second messengers with different cellular targets and opposite effects in numerous biological processes. Also plays an important role in the biosynthesis of complex lipids. Can also phosphorylate 1-alkyl-2-acylglycerol in vitro as efficiently as diacylglycerol provided it contains an arachidonoyl group. Also involved in the production of alkyl-lysophosphatidic acid, another bioactive lipid, through the phosphorylation of 1-alkyl-2-acetyl glycerol. The chain is Diacylglycerol kinase alpha (DGKA) from Bos taurus (Bovine).